The following is a 909-amino-acid chain: Glucan endo-1,3-beta-D-glucosidase ARB_01444 (909 aa).

An N-terminal signal peptide occupies residues 1 to 23 (MKPYTTLPGVAVLVSLLTQSAHA). Positions 136–187 (KRSPAPQRHPPAPTKATAGYQFTNCTSTSNPGPTATSPTSGIPSQPSAPPAT) are disordered. Residues 155 to 180 (YQFTNCTSTSNPGPTATSPTSGIPSQ) show a composition bias toward polar residues. Asparagine 159, asparagine 239, and asparagine 259 each carry an N-linked (GlcNAc...) asparagine glycan. The beta-sandwich subdomain stretch occupies residues 191 to 430 (QDIFQPIAKD…KGVIQVAKNP (240 aa)). The GH81 domain occupies 191 to 909 (QDIFQPIAKD…AGEYSTYIAL (719 aa)). The alpha/beta subdomain stretch occupies residues 431-524 (SAEEGEGIYD…GDSWTMVEGN (94 aa)). A (alpha/beta)6 barrel subdomain region spans residues 539–909 (SSQVTLSEGA…AGEYSTYIAL (371 aa)). The active site involves aspartate 654. Residues histidine 658, aspartate 727, glutamate 729, and glutamate 733 each contribute to the (1,3-beta-D-glucosyl)n site. Active-site residues include glutamate 729 and glutamate 733. The may provide specificity for triple-helical beta-glucan stretch occupies residues 798–800 (KID). (1,3-beta-D-glucosyl)n is bound at residue tyrosine 811.

Belongs to the glycosyl hydrolase 81 family.

The protein resides in the secreted. It is found in the cell wall. The catalysed reaction is Hydrolysis of (1-&gt;3)-beta-D-glucosidic linkages in (1-&gt;3)-beta-D-glucans.. Functionally, cleaves internal linkages in 1,3-beta-glucan. Probably involved in cell separation after cytokinesis. The protein is Glucan endo-1,3-beta-D-glucosidase ARB_01444 of Arthroderma benhamiae (strain ATCC MYA-4681 / CBS 112371) (Trichophyton mentagrophytes).